The primary structure comprises 448 residues: Tubulin beta chain (448 aa).

Residues glutamine 11, glutamate 69, serine 138, glycine 142, threonine 143, glycine 144, asparagine 204, and asparagine 226 each contribute to the GTP site. Mg(2+) is bound at residue glutamate 69. The tract at residues tyrosine 425–glutamate 448 is disordered. Positions glutamate 432–glutamate 448 are enriched in acidic residues.

Belongs to the tubulin family. In terms of assembly, dimer of alpha and beta chains. A typical microtubule is a hollow water-filled tube with an outer diameter of 25 nm and an inner diameter of 15 nM. Alpha-beta heterodimers associate head-to-tail to form protofilaments running lengthwise along the microtubule wall with the beta-tubulin subunit facing the microtubule plus end conferring a structural polarity. Microtubules usually have 13 protofilaments but different protofilament numbers can be found in some organisms and specialized cells. Requires Mg(2+) as cofactor.

Its subcellular location is the cytoplasm. It is found in the cytoskeleton. Tubulin is the major constituent of microtubules, a cylinder consisting of laterally associated linear protofilaments composed of alpha- and beta-tubulin heterodimers. Microtubules grow by the addition of GTP-tubulin dimers to the microtubule end, where a stabilizing cap forms. Below the cap, tubulin dimers are in GDP-bound state, owing to GTPase activity of alpha-tubulin. The polypeptide is Tubulin beta chain (benR) (Aspergillus parasiticus).